Reading from the N-terminus, the 194-residue chain is Probable calcium-binding protein CML45 (194 aa).

Basic and acidic residues predominate over residues 52 to 63 (NNKDQQETLTKQ). Residues 52–81 (NNKDQQETLTKQEDDDDDDDDDDDDDDDDI) form a disordered region. The span at 64–81 (EDDDDDDDDDDDDDDDDI) shows a compositional bias: acidic residues. EF-hand domains follow at residues 76 to 98 (DDDD…LGLF), 122 to 157 (ASLE…LGFK), and 160 to 194 (SYLD…TSFY). Ca(2+) is bound by residues Asp-135, Asn-137, Asp-139, Glu-146, Asp-173, Asn-175, Asp-177, Lys-179, and Glu-184.

Potential calcium sensor. This is Probable calcium-binding protein CML45 from Arabidopsis thaliana (Mouse-ear cress).